The primary structure comprises 533 residues: CTP synthase (533 aa).

The interval 1-264 (MKYIFVTGGV…GKLVTEKLNL (264 aa)) is amidoligase domain. Ser-12 is a CTP binding site. Ser-12 provides a ligand contact to UTP. Residues 13 to 18 (SLGKGI) and Asp-70 each bind ATP. Mg(2+) contacts are provided by Asp-70 and Glu-138. CTP is bound by residues 145–147 (DIE), 185–190 (KTKPTQ), and Lys-221. UTP-binding positions include 185-190 (KTKPTQ) and Lys-221. 237 to 239 (KDA) provides a ligand contact to ATP. In terms of domain architecture, Glutamine amidotransferase type-1 spans 289–533 (TIGIVGKYIE…HGLVKASIEK (245 aa)). L-glutamine is bound at residue Gly-357. Catalysis depends on Cys-384, which acts as the Nucleophile; for glutamine hydrolysis. Residues 385-388 (LGMQ), Glu-407, and Arg-464 each bind L-glutamine. Residues His-509 and Glu-511 contribute to the active site.

It belongs to the CTP synthase family. Homotetramer.

It catalyses the reaction UTP + L-glutamine + ATP + H2O = CTP + L-glutamate + ADP + phosphate + 2 H(+). It carries out the reaction L-glutamine + H2O = L-glutamate + NH4(+). The enzyme catalyses UTP + NH4(+) + ATP = CTP + ADP + phosphate + 2 H(+). The protein operates within pyrimidine metabolism; CTP biosynthesis via de novo pathway; CTP from UDP: step 2/2. With respect to regulation, allosterically activated by GTP, when glutamine is the substrate; GTP has no effect on the reaction when ammonia is the substrate. The allosteric effector GTP functions by stabilizing the protein conformation that binds the tetrahedral intermediate(s) formed during glutamine hydrolysis. Inhibited by the product CTP, via allosteric rather than competitive inhibition. Catalyzes the ATP-dependent amination of UTP to CTP with either L-glutamine or ammonia as the source of nitrogen. Regulates intracellular CTP levels through interactions with the four ribonucleotide triphosphates. The sequence is that of CTP synthase from Methanococcus maripaludis (strain DSM 14266 / JCM 13030 / NBRC 101832 / S2 / LL).